Consider the following 57-residue polypeptide: UPF0391 membrane protein Nwi_2359 (57 aa).

2 consecutive transmembrane segments (helical) span residues 4–24 and 30–50; these read WVVT…GGIA and IAKI…VVGF.

The protein belongs to the UPF0391 family.

The protein localises to the cell membrane. This chain is UPF0391 membrane protein Nwi_2359, found in Nitrobacter winogradskyi (strain ATCC 25391 / DSM 10237 / CIP 104748 / NCIMB 11846 / Nb-255).